Reading from the N-terminus, the 130-residue chain is Small ribosomal subunit protein uS11 (130 aa).

This sequence belongs to the universal ribosomal protein uS11 family. In terms of assembly, part of the 30S ribosomal subunit. Interacts with proteins S7 and S18. Binds to IF-3.

Its function is as follows. Located on the platform of the 30S subunit, it bridges several disparate RNA helices of the 16S rRNA. Forms part of the Shine-Dalgarno cleft in the 70S ribosome. The chain is Small ribosomal subunit protein uS11 from Lactobacillus helveticus (strain DPC 4571).